A 293-amino-acid chain; its full sequence is Elongation factor Ts (293 aa).

The interval 80 to 83 (TDFV) is involved in Mg(2+) ion dislocation from EF-Tu.

It belongs to the EF-Ts family.

The protein resides in the cytoplasm. In terms of biological role, associates with the EF-Tu.GDP complex and induces the exchange of GDP to GTP. It remains bound to the aminoacyl-tRNA.EF-Tu.GTP complex up to the GTP hydrolysis stage on the ribosome. In Burkholderia cenocepacia (strain ATCC BAA-245 / DSM 16553 / LMG 16656 / NCTC 13227 / J2315 / CF5610) (Burkholderia cepacia (strain J2315)), this protein is Elongation factor Ts.